Consider the following 428-residue polypeptide: UPF0229 protein YeaH (428 aa).

Residues 78–90 are compositionally biased toward basic and acidic residues; the sequence is GNDHFIQNDRIER. The segment at 78 to 111 is disordered; that stretch reads GNDHFIQNDRIERPQGGGGGGSGSGQGQASQDGE. A compositionally biased stretch (gly residues) spans 92-103; that stretch reads QGGGGGGSGSGQ.

It belongs to the UPF0229 family.

In Salmonella heidelberg (strain SL476), this protein is UPF0229 protein YeaH.